The sequence spans 743 residues: Phenylalanine ammonia-lyase 1 (743 aa).

Tyr-120 serves as the catalytic Proton donor/acceptor. A cross-link (5-imidazolinone (Ala-Gly)) is located at residues 224-226 (ASG). Residue Ser-225 is modified to 2,3-didehydroalanine (Ser). 7 residues coordinate (E)-cinnamate: Asn-287, Gln-377, Arg-383, Asn-413, Lys-484, Glu-512, and Asn-515.

Belongs to the PAL/histidase family. In terms of assembly, homotetramer. In terms of processing, contains an active site 4-methylidene-imidazol-5-one (MIO), which is formed autocatalytically by cyclization and dehydration of residues Ala-Ser-Gly.

It is found in the cytoplasm. It carries out the reaction L-phenylalanine = (E)-cinnamate + NH4(+). The protein operates within phenylpropanoid metabolism; trans-cinnamate biosynthesis; trans-cinnamate from L-phenylalanine: step 1/1. Functionally, catalyzes the non-oxidative deamination of L-phenylalanine to form trans-cinnamic acid and a free ammonium ion. Facilitates the commitment step in phenylpropanoid pathways that produce secondary metabolites such as lignins, coumarins and flavonoids. The polypeptide is Phenylalanine ammonia-lyase 1 (Pleurotus ostreatus (Oyster mushroom)).